Here is a 128-residue protein sequence, read N- to C-terminus: CD59 glycoprotein (128 aa).

The N-terminal stretch at Met-1–Ser-25 is a signal peptide. Residues Leu-26–Ser-108 form the UPAR/Ly6 domain. Intrachain disulfides connect Cys-28/Cys-51, Cys-31/Cys-38, Cys-44/Cys-64, Cys-70/Cys-88, and Cys-89/Cys-94. N-linked (GlcNAc...) asparagine glycosylation occurs at Asn-43. The GPI-anchor amidated asparagine moiety is linked to residue Asn-102. The propeptide at Gly-103–Pro-128 is removed in mature form.

In terms of assembly, interacts with T-cell surface antigen CD2. N- and O-glycosylated.

It localises to the cell membrane. Its subcellular location is the secreted. Functionally, potent inhibitor of the complement membrane attack complex (MAC) action, which protects self-cells from damage during complement activation. Acts by binding to the beta-haipins of C8 (C8A and C8B) components of the assembling MAC, forming an intermolecular beta-sheet that prevents incorporation of the multiple copies of C9 required for complete formation of the osmolytic pore. This is CD59 glycoprotein from Chlorocebus aethiops (Green monkey).